The primary structure comprises 510 residues: AAA-ATPase At3g28540 (510 aa).

A helical membrane pass occupies residues 7–25; sequence LFGFTGTTMASLMFFWSVY. 246–253 is an ATP binding site; it reads GPPGTGKS. Positions 460–510 are disordered; sequence KEKAKKLAEEEKMKKAARDARRIKKKAEEEHKKKNKVEENGDVSHDNGNHI.

Belongs to the AAA ATPase family. BCS1 subfamily. It depends on Mg(2+) as a cofactor.

It is found in the membrane. The enzyme catalyses ATP + H2O = ADP + phosphate + H(+). This chain is AAA-ATPase At3g28540, found in Arabidopsis thaliana (Mouse-ear cress).